The primary structure comprises 225 residues: NAD(P)H-quinone oxidoreductase subunit K, chloroplastic (225 aa).

[4Fe-4S] cluster-binding residues include Cys-43, Cys-44, Cys-108, and Cys-139.

The protein belongs to the complex I 20 kDa subunit family. As to quaternary structure, NDH is composed of at least 16 different subunits, 5 of which are encoded in the nucleus. Requires [4Fe-4S] cluster as cofactor.

The protein localises to the plastid. Its subcellular location is the chloroplast thylakoid membrane. The catalysed reaction is a plastoquinone + NADH + (n+1) H(+)(in) = a plastoquinol + NAD(+) + n H(+)(out). It catalyses the reaction a plastoquinone + NADPH + (n+1) H(+)(in) = a plastoquinol + NADP(+) + n H(+)(out). Its function is as follows. NDH shuttles electrons from NAD(P)H:plastoquinone, via FMN and iron-sulfur (Fe-S) centers, to quinones in the photosynthetic chain and possibly in a chloroplast respiratory chain. The immediate electron acceptor for the enzyme in this species is believed to be plastoquinone. Couples the redox reaction to proton translocation, and thus conserves the redox energy in a proton gradient. In Crucihimalaya wallichii (Rock-cress), this protein is NAD(P)H-quinone oxidoreductase subunit K, chloroplastic.